A 238-amino-acid chain; its full sequence is MTGNTERLLIETTTAWGIPLSEHQYAQFQRYLDELIIWNDRFNLTAIRDRSAMIRRHLLDSLYLARDWQTAPANLIDIGSGAGFPALPLKIAYPTLPVTLVEATGKKAEFLRHVIECLELTDVRVLHERIETVGRNLAEREQYEVVTARAVAELRVLVEYALPLLRIGGRLLAPKGRDPTDEIAAAQRALHVLGGEVSACEPVHIPGEEPRSLVIITKIAPTPSRFPRAIGIPARRPL.

S-adenosyl-L-methionine-binding positions include Gly79, Phe84, 102–104 (EAT), 130–131 (IE), and Arg149.

This sequence belongs to the methyltransferase superfamily. RNA methyltransferase RsmG family.

Its subcellular location is the cytoplasm. Its function is as follows. Specifically methylates the N7 position of a guanine in 16S rRNA. The protein is Ribosomal RNA small subunit methyltransferase G of Chloroflexus aggregans (strain MD-66 / DSM 9485).